A 400-amino-acid polypeptide reads, in one-letter code: Enoyl-[acyl-carrier-protein] reductase [NADH] (400 aa).

NAD(+)-binding positions include 48 to 53, 74 to 75, 111 to 112, and 139 to 140; these read GSSSGY, FE, DA, and LA. Y225 contacts substrate. Y235 functions as the Proton donor in the catalytic mechanism. NAD(+) contacts are provided by residues K244 and 273–275; that span reads VVT.

This sequence belongs to the TER reductase family. As to quaternary structure, monomer.

It catalyses the reaction a 2,3-saturated acyl-[ACP] + NAD(+) = a (2E)-enoyl-[ACP] + NADH + H(+). It functions in the pathway lipid metabolism; fatty acid biosynthesis. In terms of biological role, involved in the final reduction of the elongation cycle of fatty acid synthesis (FAS II). Catalyzes the reduction of a carbon-carbon double bond in an enoyl moiety that is covalently linked to an acyl carrier protein (ACP). The protein is Enoyl-[acyl-carrier-protein] reductase [NADH] of Aliivibrio fischeri (strain ATCC 700601 / ES114) (Vibrio fischeri).